A 312-amino-acid chain; its full sequence is Serine protease 48 (312 aa).

Positions 1 to 22 (MGPAGLKVLLLLFLGAFQGSFT) are cleaved as a signal peptide. The Peptidase S1 domain maps to 40-276 (IVGGQDAALG…YQKWISAIIS (237 aa)). C65 and C81 form a disulfide bridge. Active-site charge relay system residues include H80 and D126. N149 carries an N-linked (GlcNAc...) asparagine glycan. 3 disulfide bridges follow: C160/C235, C190/C214, and C225/C253. S229 acts as the Charge relay system in catalysis. N263 is a glycosylation site (N-linked (GlcNAc...) asparagine).

This sequence belongs to the peptidase S1 family.

It localises to the secreted. The polypeptide is Serine protease 48 (Prss48) (Mus musculus (Mouse)).